We begin with the raw amino-acid sequence, 714 residues long: Fatty acid oxidation complex subunit alpha (714 aa).

The tract at residues 1–190 (MEMASAFTLN…KLGLVDDVVP (190 aa)) is enoyl-CoA hydratase. The 3-hydroxyacyl-CoA dehydrogenase stretch occupies residues 306-714 (APLNSVGILG…FWKTTATDLQ (409 aa)).

The protein in the N-terminal section; belongs to the enoyl-CoA hydratase/isomerase family. In the central section; belongs to the 3-hydroxyacyl-CoA dehydrogenase family. Heterotetramer of two alpha chains (FadJ) and two beta chains (FadI).

The protein resides in the cytoplasm. The enzyme catalyses a (3S)-3-hydroxyacyl-CoA = a (2E)-enoyl-CoA + H2O. The catalysed reaction is a 4-saturated-(3S)-3-hydroxyacyl-CoA = a (3E)-enoyl-CoA + H2O. It catalyses the reaction a (3S)-3-hydroxyacyl-CoA + NAD(+) = a 3-oxoacyl-CoA + NADH + H(+). It carries out the reaction (3S)-3-hydroxybutanoyl-CoA = (3R)-3-hydroxybutanoyl-CoA. It participates in lipid metabolism; fatty acid beta-oxidation. Its function is as follows. Catalyzes the formation of a hydroxyacyl-CoA by addition of water on enoyl-CoA. Also exhibits 3-hydroxyacyl-CoA epimerase and 3-hydroxyacyl-CoA dehydrogenase activities. The polypeptide is Fatty acid oxidation complex subunit alpha (Escherichia coli (strain UTI89 / UPEC)).